The chain runs to 198 residues: Endonuclease V (198 aa).

Positions 38 and 101 each coordinate Mg(2+).

This sequence belongs to the endonuclease V family. Mg(2+) serves as cofactor.

The protein resides in the cytoplasm. The enzyme catalyses Endonucleolytic cleavage at apurinic or apyrimidinic sites to products with a 5'-phosphate.. DNA repair enzyme involved in the repair of deaminated bases. Selectively cleaves double-stranded DNA at the second phosphodiester bond 3' to a deoxyinosine leaving behind the intact lesion on the nicked DNA. The chain is Endonuclease V from Saccharolobus islandicus (strain Y.N.15.51 / Yellowstone #2) (Sulfolobus islandicus).